Reading from the N-terminus, the 542-residue chain is MAKMIAFDEEARRGLERGMNRLADAVKVTLGPKGRNVVLANKFGLPTITNDGVSIAREIELENSYERIGAELVKEVAKKTNDVAGDGTTTATILAQALVREGLRNVAAGANPLGLKKGIEVAVERVSEELSKQAKEVETKEQIASTASISAGDSAIGGLIAEALDKVGKEGVVTVEESNTFGLELELTEGMRFDKGYISPYFVTDADRQEAVLDDPYILIVNSKIAAVKDLLPLLEKVMQTSKPLVIISEDVEGEALATLVVNKIRGTFKSVAVKAPGFGDRRKAILGDIAILTGGQVISEDVGLKLESTSLDLLGRARKIVVTKDETTVVEGSGDPDQIAGRVSQIRNEIDKSDSDYDREKLQERLAKLAGGVAVIKVGAATEVELKEKKHRIEDAVSNAKAAVEEGIVAGGGVALLQASITAFEKLDLSGDEATGANIVRLALEAPIKQIAFNSGLEGGVVVDKVRNLPTGHGLNAATGEYVDLIATGIIDPAKVTRSALQNAASIAGLFLTTEAVVANTPEYAEADAANVDAAMRSQGF.

Residues 29-32, 86-90, G413, 477-479, and D493 each bind ATP; these read TLGP, DGTTT, and NAA.

This sequence belongs to the chaperonin (HSP60) family. Forms a cylinder of 14 subunits composed of two heptameric rings stacked back-to-back. Interacts with the co-chaperonin GroES.

The protein localises to the cytoplasm. It catalyses the reaction ATP + H2O + a folded polypeptide = ADP + phosphate + an unfolded polypeptide.. Functionally, together with its co-chaperonin GroES, plays an essential role in assisting protein folding. The GroEL-GroES system forms a nano-cage that allows encapsulation of the non-native substrate proteins and provides a physical environment optimized to promote and accelerate protein folding. This is Chaperonin GroEL 3 from Frankia alni (strain DSM 45986 / CECT 9034 / ACN14a).